We begin with the raw amino-acid sequence, 159 residues long: Protein-export protein SecB (159 aa).

It belongs to the SecB family. In terms of assembly, homotetramer, a dimer of dimers. One homotetramer interacts with 1 SecA dimer.

It localises to the cytoplasm. In terms of biological role, one of the proteins required for the normal export of preproteins out of the cell cytoplasm. It is a molecular chaperone that binds to a subset of precursor proteins, maintaining them in a translocation-competent state. It also specifically binds to its receptor SecA. The protein is Protein-export protein SecB of Nitrobacter hamburgensis (strain DSM 10229 / NCIMB 13809 / X14).